Here is a 305-residue protein sequence, read N- to C-terminus: Putative glutamine--fructose-6-phosphate aminotransferase [isomerizing] (305 aa).

The active-site Nucleophile; for GATase activity is Cys-2. In terms of domain architecture, Glutamine amidotransferase type-2 spans 2-305; it reads CGIFGYCNFL…RLCITSAVCE (304 aa).

It catalyses the reaction D-fructose 6-phosphate + L-glutamine = D-glucosamine 6-phosphate + L-glutamate. Its pathway is nucleotide-sugar biosynthesis; UDP-N-acetyl-alpha-D-glucosamine biosynthesis; alpha-D-glucosamine 6-phosphate from D-fructose 6-phosphate: step 1/1. Its function is as follows. Involved in amino sugar synthesis (formation of chitin, supplies the amino sugars of asparagine-linked oligosaccharides of glycoproteins). The protein is Putative glutamine--fructose-6-phosphate aminotransferase [isomerizing] of Saccharomyces cerevisiae (strain Lalvin EC1118 / Prise de mousse) (Baker's yeast).